We begin with the raw amino-acid sequence, 861 residues long: DNA mismatch repair protein MutS (861 aa).

Glycine 609–serine 616 is an ATP binding site.

It belongs to the DNA mismatch repair MutS family.

Its function is as follows. This protein is involved in the repair of mismatches in DNA. It is possible that it carries out the mismatch recognition step. This protein has a weak ATPase activity. The sequence is that of DNA mismatch repair protein MutS from Borrelia hermsii (strain HS1 / DAH).